A 109-amino-acid polypeptide reads, in one-letter code: Parvalbumin, thymic (109 aa).

Residue Ala2 is modified to N-acetylalanine. EF-hand domains lie at 39 to 74 (KTPD…FSSS) and 78 to 109 (LTSA…LVKA). Positions 52, 54, 56, 63, 91, 93, 95, 97, and 102 each coordinate Ca(2+).

Belongs to the parvalbumin family.

Appears to promote immune maturation in bone marrow cells in culture. Binds two calcium ions. The protein is Parvalbumin, thymic of Gallus gallus (Chicken).